Consider the following 617-residue polypeptide: mRNA export factor MEX67 (617 aa).

Positions 1-10 (MSYRGRGGGY) are enriched in gly residues. The segment at 1 to 24 (MSYRGRGGGYNNNRGQFSSGPHQH) is disordered. LRR repeat units lie at residues 185 to 206 (DVDS…TSMA), 211 to 232 (KLQN…ETWR), and 237 to 258 (FLRE…AEIQ). Residues 309–499 (LATNFIANYL…MIVASDTLLI (191 aa)) enclose the NTF2 domain. Disordered regions lie at residues 442 to 469 (EVDG…HKRI) and 513 to 554 (LPSN…TTAD). Composition is skewed to low complexity over residues 445–459 (GSAS…GGSR) and 526–542 (ATST…TTPQ). Residues 565-617 (QIQQELLVKILLETKLNINYGIMLCEQSNWDYQQASVNFKNSAASLPSDAFVQ) enclose the TAP-C domain.

It belongs to the NXF family. As to quaternary structure, interacts with nucleoporin complex protein MTR2.

It is found in the nucleus. The protein localises to the cytoplasm. Its function is as follows. Involved in the export of mRNA from the nucleus to the cytoplasm. The sequence is that of mRNA export factor MEX67 from Candida albicans (strain SC5314 / ATCC MYA-2876) (Yeast).